Here is a 788-residue protein sequence, read N- to C-terminus: Phosphoribosylformylglycinamidine synthase subunit PurL (788 aa).

Residue histidine 50 is part of the active site. ATP contacts are provided by tyrosine 53 and lysine 92. Glutamate 94 serves as a coordination point for Mg(2+). Residues 95–98 (SHNH) and arginine 117 each bind substrate. The active-site Proton acceptor is the histidine 96. Residue aspartate 118 coordinates Mg(2+). A substrate-binding site is contributed by glutamine 241. Residue aspartate 269 coordinates Mg(2+). 313–315 (ESQ) contacts substrate. ATP-binding residues include aspartate 524 and glycine 561. Position 562 (asparagine 562) interacts with Mg(2+). Serine 564 provides a ligand contact to substrate.

The protein belongs to the FGAMS family. Monomer. Part of the FGAM synthase complex composed of 1 PurL, 1 PurQ and 2 PurS subunits.

It is found in the cytoplasm. The catalysed reaction is N(2)-formyl-N(1)-(5-phospho-beta-D-ribosyl)glycinamide + L-glutamine + ATP + H2O = 2-formamido-N(1)-(5-O-phospho-beta-D-ribosyl)acetamidine + L-glutamate + ADP + phosphate + H(+). Its pathway is purine metabolism; IMP biosynthesis via de novo pathway; 5-amino-1-(5-phospho-D-ribosyl)imidazole from N(2)-formyl-N(1)-(5-phospho-D-ribosyl)glycinamide: step 1/2. In terms of biological role, part of the phosphoribosylformylglycinamidine synthase complex involved in the purines biosynthetic pathway. Catalyzes the ATP-dependent conversion of formylglycinamide ribonucleotide (FGAR) and glutamine to yield formylglycinamidine ribonucleotide (FGAM) and glutamate. The FGAM synthase complex is composed of three subunits. PurQ produces an ammonia molecule by converting glutamine to glutamate. PurL transfers the ammonia molecule to FGAR to form FGAM in an ATP-dependent manner. PurS interacts with PurQ and PurL and is thought to assist in the transfer of the ammonia molecule from PurQ to PurL. This is Phosphoribosylformylglycinamidine synthase subunit PurL from Nostoc punctiforme (strain ATCC 29133 / PCC 73102).